The primary structure comprises 123 residues: Ribonuclease P protein component (123 aa).

Belongs to the RnpA family. Consists of a catalytic RNA component (M1 or rnpB) and a protein subunit.

The enzyme catalyses Endonucleolytic cleavage of RNA, removing 5'-extranucleotides from tRNA precursor.. In terms of biological role, RNaseP catalyzes the removal of the 5'-leader sequence from pre-tRNA to produce the mature 5'-terminus. It can also cleave other RNA substrates such as 4.5S RNA. The protein component plays an auxiliary but essential role in vivo by binding to the 5'-leader sequence and broadening the substrate specificity of the ribozyme. In Streptococcus pneumoniae (strain Hungary19A-6), this protein is Ribonuclease P protein component.